A 536-amino-acid polypeptide reads, in one-letter code: Probable E3 ubiquitin-protein ligase ARI13 (536 aa).

The interval 83-328 is TRIAD supradomain; sequence KISSCGICFK…GFYKFCNVSM (246 aa). Cys87, Cys90, Cys106, His108, Cys111, Cys114, Cys135, Cys140, Cys180, Cys185, Cys210, Cys212, Cys217, Cys220, His225, Cys230, Cys277, Cys280, Cys297, Cys299, Cys304, Cys307, His314, and Cys324 together coordinate Zn(2+). The RING-type 1 zinc finger occupies 87 to 140; sequence CGICFKTCDDGDYLISTPFCSHMFCKSCWRKYLEKNFYLVEKTQTRISCPHGAC. An IBR-type zinc finger spans residues 158 to 230; that stretch reads EMYVEYILRS…MLESHKPVTC (73 aa). Residues 277–307 form an RING-type 2; atypical zinc finger; the sequence is CPHCLRPADLGTKQYLRFLTCACNGRFCWKC. The segment at 495–526 adopts a RanBP2-type zinc-finger fold; sequence DYGGLFWLCDRCTYGNTWFHKECLMCSDDIAA.

This sequence belongs to the RBR family. Ariadne subfamily. The cofactor is Zn(2+).

It carries out the reaction [E2 ubiquitin-conjugating enzyme]-S-ubiquitinyl-L-cysteine + [acceptor protein]-L-lysine = [E2 ubiquitin-conjugating enzyme]-L-cysteine + [acceptor protein]-N(6)-ubiquitinyl-L-lysine.. Its pathway is protein modification; protein ubiquitination. Functionally, might act as an E3 ubiquitin-protein ligase, or as part of E3 complex, which accepts ubiquitin from specific E2 ubiquitin-conjugating enzymes and then transfers it to substrates. The polypeptide is Probable E3 ubiquitin-protein ligase ARI13 (ARI13) (Arabidopsis thaliana (Mouse-ear cress)).